Consider the following 280-residue polypeptide: Large ribosomal subunit protein uL2 (280 aa).

Disordered stretches follow at residues 1 to 59 (MAIR…GGHK) and 223 to 280 (GVVM…NKKR). Basic residues-rich tracts occupy residues 45–59 (VHGH…GGHK) and 269–280 (VRRRRSNKNKKR).

This sequence belongs to the universal ribosomal protein uL2 family. Part of the 50S ribosomal subunit. Forms a bridge to the 30S subunit in the 70S ribosome.

Its function is as follows. One of the primary rRNA binding proteins. Required for association of the 30S and 50S subunits to form the 70S ribosome, for tRNA binding and peptide bond formation. It has been suggested to have peptidyltransferase activity; this is somewhat controversial. Makes several contacts with the 16S rRNA in the 70S ribosome. The sequence is that of Large ribosomal subunit protein uL2 from Corynebacterium jeikeium (strain K411).